A 717-amino-acid polypeptide reads, in one-letter code: Cleavage stimulation factor subunit 3 (717 aa).

At S2 the chain carries N-acetylserine. HAT repeat units lie at residues 45 to 77, 79 to 110, 117 to 152, 163 to 196, 221 to 261, 271 to 303, 319 to 352, 354 to 387, and 458 to 494; these read QPIDKARKTYERLVAQFPSSGRFWKLYIEAEIK, KNYDKVEKLFQRCLMKVLHIDLWKCYLSYVRE, SYKEKMAQAYDFALDKIGMEIMSYQIWVDYINFLKG, QRITAVRRVYQRGCVNPMINIEQLWRDYNKYEEG, KEYE…WEKS, LITKRVMFAYEQCLLVLGHHPDIWYEAAQYLEQ, LFSDEAANIYERAISTLLKKNMLLYFAYADYEES, MKYEKVHSIYNRLLAIEDIDPTLVYIQYMKFARR, and NEDNNTRVLFERVLTSGSLPPEKSGEIWARFLAFESN. Positions 684 to 705 are disordered; the sequence is VKRPNEDSDEDEEKGAVVPPVH. The residue at position 691 (S691) is a Phosphoserine.

As to quaternary structure, homodimer. The CSTF complex is composed of CSTF1 (50 kDa subunit), CSTF2 (64 kDa subunit) and CSTF3 (77 kDa subunit). CSTF3 directly interacts with CSTF1 and CSTF2. Interacts with FIP1L1.

It localises to the nucleus. Its function is as follows. One of the multiple factors required for polyadenylation and 3'-end cleavage of mammalian pre-mRNAs. The chain is Cleavage stimulation factor subunit 3 (CSTF3) from Homo sapiens (Human).